We begin with the raw amino-acid sequence, 510 residues long: Zinc finger protein 692 (510 aa).

2 disordered regions span residues 1–20 (MAAS…RQLD) and 121–306 (WGPS…EDTA). Ser161 bears the Phosphoserine mark. Over residues 163–172 (CDERAQEARM) the composition is skewed to basic and acidic residues. Acidic residues predominate over residues 188 to 201 (EDGEEEEEDEEEML). Ser225 is subject to Phosphoserine. The segment covering 237-265 (APAPAAVPAPLASPSSSASSLGSGAPGPV) has biased composition (low complexity). Polar residues predominate over residues 278–297 (QADQQTEPLASPGSQAQSAL). C2H2-type zinc fingers lie at residues 322–347 (LPCD…KYQH), 353–377 (FSCP…VKLH), 383–405 (YICE…RRIH), 411–433 (LQCE…RRKH), and 442–465 (FPCE…SKSH). Ser464 carries the post-translational modification Phosphoserine.

It belongs to the krueppel C2H2-type zinc-finger protein family. In terms of processing, phosphorylation at Ser-464 results in loss of DNA-binding activity.

Its subcellular location is the nucleus. Functionally, may act as an transcriptional repressor for PCK1 gene expression, in turn may participate in the hepatic gluconeogenesis regulation through the activated AMPK signaling pathway. The polypeptide is Zinc finger protein 692 (Bos taurus (Bovine)).